The primary structure comprises 228 residues: DNA mismatch repair protein MutH (228 aa).

Belongs to the MutH family.

The protein localises to the cytoplasm. In terms of biological role, sequence-specific endonuclease that cleaves unmethylated GATC sequences. It is involved in DNA mismatch repair. This Yersinia enterocolitica serotype O:8 / biotype 1B (strain NCTC 13174 / 8081) protein is DNA mismatch repair protein MutH.